A 440-amino-acid chain; its full sequence is Na(+)/H(+) antiporter NhaA (440 aa).

Transmembrane regions (helical) follow at residues 25–45, 76–96, 112–132, 141–161, 170–190, 194–214, 225–245, 312–332, 345–365, 378–398, and 414–434; these read FLHI…VALV, LHHV…GLEV, TLPI…YLSM, GWGI…AILG, VLLL…IAIG, SLDG…HFLS, VIVG…ATLI, HPWT…GVLI, VVIG…WLVI, WPIL…ALFI, and GVLV…LWTL.

This sequence belongs to the NhaA Na(+)/H(+) (TC 2.A.33) antiporter family.

Its subcellular location is the cell inner membrane. It catalyses the reaction Na(+)(in) + 2 H(+)(out) = Na(+)(out) + 2 H(+)(in). Functionally, na(+)/H(+) antiporter that extrudes sodium in exchange for external protons. This is Na(+)/H(+) antiporter NhaA from Rhodopirellula baltica (strain DSM 10527 / NCIMB 13988 / SH1).